Here is a 436-residue protein sequence, read N- to C-terminus: MWLFPERVYYLKNENLLISFYIECYLTITTMFLDDDTPHEESTVQPYSINLVRRLMEGNTKDEGIRVLRMAIKFERIDIIKILLEYGVNVNENEYYEEELTCYSVLHFAVDIGNKDIVSILLYAGADVNNTRCYLRNTPLHLAIQQKNTDIAKLLLDSGADQNITNENGNIPIQIAVTYNDEKMVNILLQYSPNLEIADYNGRTVLHNAVLDKNINIVSLLLENGALVDSKCIEGYTILLSSVNRTDPFIIKMLLHRGANPFFLNIKLNHIPLTWYCYCHGNSLSMTVKDLISSAVMISHIRDKVKLTPGFKINEDFTNSIYRFNYYKNLCEEEIRNMKIRRAGYKLTVFDFIKAGKQDDHNTLARCIELLLVGVNKNEFQIYGDIIDQYIKIGLYRKEQLDRVVNSLTSTITNLPYEVIYIIVEKMTNKELCEIR.

ANK repeat units follow at residues 63–92 (EGIRVLRMAIKFERIDIIKILLEYGVNVNE), 101–130 (TCYSVLHFAVDIGNKDIVSILLYAGADVNN), 135–164 (LRNTPLHLAIQQKNTDIAKLLLDSGADQNI), 168–197 (NGNIPIQIAVTYNDEKMVNILLQYSPNLEI), 201–230 (NGRTVLHNAVLDKNINIVSLLLENGALVDS), and 234–266 (EGYTILLSSVNRTDPFIIKMLLHRGANPFFLNI). The 28-residue stretch at 409 to 436 (TSTITNLPYEVIYIIVEKMTNKELCEIR) folds into the F-box domain.

The chain is Putative ankyrin repeat protein FPV026 from Fowlpox virus (strain NVSL) (FPV).